The chain runs to 327 residues: MDAIKGSELQIPDAIFAWVLDGQGGVKPLADDDIIDKDKPCWLHLNYTHSDSADWLAATPLLPNNVRDALAGESTRPRVTRIGDGALITLRCINGSTDERPDQLVAMRLYMDERLIVSTRQRKVLALDDVLGDLKEGNGPTDGGSWLVEVCDALTDHASEFIEQLHDRIIDLEDDLLDQQVPPRGFLALLRKQLIVMRRYMAPQRDVYARLASERLPWMSDDQRRRMQDIAERLGRGLDEIDSCIARTAIMSDEIAQIMQESLARRTYTMSLMAMVFLPSTFLTGLFGVNLGGIPGNSWHLGFSLFCLMLVVVIGGVAWWLHRSKWL.

Residues 1–273 (MDAIKGSELQ…ARRTYTMSLM (273 aa)) are Cytoplasmic-facing. The chain crosses the membrane as a helical span at residues 274 to 294 (AMVFLPSTFLTGLFGVNLGGI). The Periplasmic portion of the chain corresponds to 295-300 (PGNSWH). A helical transmembrane segment spans residues 301 to 321 (LGFSLFCLMLVVVIGGVAWWL). Residues 322 to 327 (HRSKWL) are Cytoplasmic-facing.

The protein belongs to the CorA metal ion transporter (MIT) (TC 1.A.35) family.

The protein localises to the cell inner membrane. It carries out the reaction Zn(2+)(out) + H(+)(out) = Zn(2+)(in) + H(+)(in). Zinc transporter. Acts as a Zn(2+):proton symporter, which likely mediates zinc ion uptake. In Klebsiella pneumoniae subsp. pneumoniae (strain ATCC 700721 / MGH 78578), this protein is Zinc transport protein ZntB.